Consider the following 656-residue polypeptide: uncharacterized protein (656 aa).

The interval 623 to 656 (EIDIPGTPASIDPEWSRPPGSITDDHVFDAPLHR) is disordered. Over residues 645 to 656 (TDDHVFDAPLHR) the composition is skewed to basic and acidic residues.

This is an uncharacterized protein from Mycobacterium tuberculosis (strain CDC 1551 / Oshkosh).